The primary structure comprises 215 residues: ER lumen protein-retaining receptor A (215 aa).

The Lumenal segment spans residues 1-2 (MN). A helical transmembrane segment spans residues 3–21 (IFRFAGDMSHLISVLILLL). At 22–35 (KIYATKSCAGISLK) the chain is on the cytoplasmic side. A helical transmembrane segment spans residues 36–53 (TQELYALVFLTRYLDLFT). Residues 54-61 (DYVSLYNS) lie on the Lumenal side of the membrane. The helical transmembrane segment at 62–82 (IMKIVFIASSLAIVWCMRRHP) threads the bilayer. The Cytoplasmic portion of the chain corresponds to 83–98 (LVRRSYDKDLDTFRHQ). A helical membrane pass occupies residues 99-112 (YVVLACFVLGLILN). Residues 113 to 119 (EKFTVQE) lie on the Lumenal side of the membrane. The helical transmembrane segment at 120-139 (VFWAFSIYLEAVAILPQLVL) threads the bilayer. Topologically, residues 140–151 (LQRSGNVDNLTG) are cytoplasmic. A helical transmembrane segment spans residues 152-170 (QYVVFLGAYRGLYIINWIY). Over 171–181 (RYFTEDHFTRW) the chain is Lumenal. A helical membrane pass occupies residues 182–202 (IACVSGLVQTALYADFFYYYY). Residues 203 to 215 (ISWKTNTKLKLPA) lie on the Cytoplasmic side of the membrane.

It belongs to the ERD2 family.

The protein resides in the endoplasmic reticulum membrane. Functionally, required for the retention of luminal endoplasmic reticulum proteins. Determines the specificity of the luminal ER protein retention system. Also required for normal vesicular traffic through the Golgi. This receptor recognizes H-D-E-L. This chain is ER lumen protein-retaining receptor A (ERD2A), found in Arabidopsis thaliana (Mouse-ear cress).